The primary structure comprises 206 residues: Small ribosomal subunit protein uS4 (206 aa).

In terms of domain architecture, S4 RNA-binding spans G96–K156.

The protein belongs to the universal ribosomal protein uS4 family. Part of the 30S ribosomal subunit. Contacts protein S5. The interaction surface between S4 and S5 is involved in control of translational fidelity.

One of the primary rRNA binding proteins, it binds directly to 16S rRNA where it nucleates assembly of the body of the 30S subunit. Functionally, with S5 and S12 plays an important role in translational accuracy. The polypeptide is Small ribosomal subunit protein uS4 (Shigella flexneri).